The following is a 344-amino-acid chain: Methionine import ATP-binding protein MetN 1 (344 aa).

An ABC transporter domain is found at 2–241 (IEIRNISQRF…PHHEVTRALI (240 aa)). 38–45 (GRSGAGKS) is an ATP binding site.

It belongs to the ABC transporter superfamily. Methionine importer (TC 3.A.1.24) family. As to quaternary structure, the complex is composed of two ATP-binding proteins (MetN), two transmembrane proteins (MetI) and a solute-binding protein (MetQ).

It localises to the cell inner membrane. The enzyme catalyses L-methionine(out) + ATP + H2O = L-methionine(in) + ADP + phosphate + H(+). It carries out the reaction D-methionine(out) + ATP + H2O = D-methionine(in) + ADP + phosphate + H(+). Its function is as follows. Part of the ABC transporter complex MetNIQ involved in methionine import. Responsible for energy coupling to the transport system. The chain is Methionine import ATP-binding protein MetN 1 from Paraburkholderia xenovorans (strain LB400).